We begin with the raw amino-acid sequence, 972 residues long: 116 kDa U5 small nuclear ribonucleoprotein component (972 aa).

At Met1 the chain carries N-acetylmethionine. Residues 1–54 are disordered; it reads MDTDLYDEFGNYIGPELDSDEDDDELGRETKDLDEMDDDDDDDDVGDHDDDHPG. Acidic residues-rich tracts occupy residues 17 to 26 and 34 to 48; these read LDSDEDDDEL and DEMD…VGDH. Position 19 is a phosphoserine (Ser19). Lys64 is covalently cross-linked (Glycyl lysine isopeptide (Lys-Gly) (interchain with G-Cter in SUMO1); alternate). Lys64 participates in a covalent cross-link: Glycyl lysine isopeptide (Lys-Gly) (interchain with G-Cter in SUMO2); alternate. Thr86 is modified (phosphothreonine). A tr-type G domain is found at 127-409; it reads ELIRNVTLCG…GIHLTKEELK (283 aa). GTP-binding positions include 136 to 143, 204 to 208, and 258 to 261; these read GHLHHGKT, DTPGH, and NKID.

Belongs to the TRAFAC class translation factor GTPase superfamily. Classic translation factor GTPase family. EF-G/EF-2 subfamily. Component of the U5 snRNP and the U4/U6-U5 tri-snRNP complex, a building block of the spliceosome. The U4/U6-U5 tri-snRNP complex is composed of the U4, U6 and U5 snRNAs and at least PRPF3, PRPF4, PRPF6, PRPF8, PRPF31, SNRNP200, TXNL4A, SNRNP40, DDX23, CD2BP2, PPIH, SNU13, EFTUD2, SART1 and USP39. Component of the pre-catalytic, catalytic and post-catalytic spliceosome complexes. Component of the minor spliceosome, which splices U12-type introns. Within this complex, interacts with CRIPT. Interacts with ERBB4 and PRPF8. Interacts with PIH1D1. Interacts with RPAP3 and URI1 in a ZNHIT2-dependent manner. Interacts with NRDE2. Interacts with FAM50A. Interacts with UBL5.

It localises to the nucleus. In terms of biological role, required for pre-mRNA splicing as component of the spliceosome, including pre-catalytic, catalytic and post-catalytic spliceosomal complexes. Component of the U5 snRNP and the U4/U6-U5 tri-snRNP complex, a building block of the spliceosome. As a component of the minor spliceosome, involved in the splicing of U12-type introns in pre-mRNAs. In Homo sapiens (Human), this protein is 116 kDa U5 small nuclear ribonucleoprotein component (EFTUD2).